Here is a 297-residue protein sequence, read N- to C-terminus: Leucine-rich repeat-containing protein 25 (297 aa).

An N-terminal signal peptide occupies residues 1-25 (MGSIRTRLLWLCLLMLLALLHKSGS). Over 26 to 169 (QDLTCMVHPS…SCPPSWGPGT (144 aa)) the chain is Extracellular. 2 N-linked (GlcNAc...) asparagine glycosylation sites follow: N44 and N49. 2 LRR repeats span residues 66–89 (HAQV…DKLE) and 90–113 (KLQT…LRCD). Residues N133 and N152 are each glycosylated (N-linked (GlcNAc...) asparagine). The chain crosses the membrane as a helical span at residues 170–190 (IGALVAGTISLAVAVSGSVLA). Residues 191-297 (WRLLRRRRRA…VYCNLESLGR (107 aa)) lie on the Cytoplasmic side of the membrane. The tract at residues 202–244 (EHSLSKAQMSPHDIPKPVTDFLPRYSSRRPGPKAPDSPPSRFT) is disordered. S211, S238, and S267 each carry phosphoserine. A Phosphotyrosine modification is found at Y289.

Interacts with RIGI. Interacts with SQSTM1. Interacts with p65/RELA; this interaction promotes the degradation of RELA through autophagy.

The protein localises to the membrane. Its subcellular location is the cytoplasm. Functionally, plays a role in the inhibition of RLR-mediated type I interferon signaling pathway by targeting RIGI for autophagic degradation. Interacts specifically with ISG15-associated RIGI to promote interaction between RIGI and the autophagic cargo receptor p62/SQSTM1 to mediate RIGI degradation via selective autophagy. Plays also a role in the inhibition of NF-kappa-B signaling pathway and inflammatory response by promoting the degradation of p65/RELA. This Mus musculus (Mouse) protein is Leucine-rich repeat-containing protein 25 (Lrrc25).